A 101-amino-acid polypeptide reads, in one-letter code: Replication restart protein PriB (101 aa).

The SSB domain maps to 1 to 101; the sequence is MTTNNLVLAG…LHAENVELKT (101 aa).

Belongs to the PriB family. In terms of assembly, homodimer. Interacts with PriA and DnaT. Component of the replication restart primosome. Primosome assembly occurs via a 'hand-off' mechanism. PriA binds to replication forks, subsequently PriB then DnaT bind; DnaT then displaces ssDNA to generate the helicase loading substrate.

Its function is as follows. Involved in the restart of stalled replication forks, which reloads the replicative helicase on sites other than the origin of replication; the PriA-PriB pathway is the major replication restart pathway. During primosome assembly it facilitates complex formation between PriA and DnaT on DNA; stabilizes PriA on DNA. Stimulates the DNA unwinding activity of PriA helicase. The protein is Replication restart protein PriB of Shewanella pealeana (strain ATCC 700345 / ANG-SQ1).